The chain runs to 95 residues: Aspartyl/glutamyl-tRNA(Asn/Gln) amidotransferase subunit C (95 aa).

It belongs to the GatC family. In terms of assembly, heterotrimer of A, B and C subunits.

It carries out the reaction L-glutamyl-tRNA(Gln) + L-glutamine + ATP + H2O = L-glutaminyl-tRNA(Gln) + L-glutamate + ADP + phosphate + H(+). It catalyses the reaction L-aspartyl-tRNA(Asn) + L-glutamine + ATP + H2O = L-asparaginyl-tRNA(Asn) + L-glutamate + ADP + phosphate + 2 H(+). Its function is as follows. Allows the formation of correctly charged Asn-tRNA(Asn) or Gln-tRNA(Gln) through the transamidation of misacylated Asp-tRNA(Asn) or Glu-tRNA(Gln) in organisms which lack either or both of asparaginyl-tRNA or glutaminyl-tRNA synthetases. The reaction takes place in the presence of glutamine and ATP through an activated phospho-Asp-tRNA(Asn) or phospho-Glu-tRNA(Gln). The sequence is that of Aspartyl/glutamyl-tRNA(Asn/Gln) amidotransferase subunit C from Dinoroseobacter shibae (strain DSM 16493 / NCIMB 14021 / DFL 12).